The following is a 499-amino-acid chain: Na(+)/H(+) antiporter NhaB (499 aa).

11 consecutive transmembrane segments (helical) span residues 33-53 (PVIFLISPYIAGWVLILEFIF), 66-86 (PGGLLAIEAVLIGMVSPHTVY), 89-109 (VSGNLEVILLLVFMVAGIYFM), 128-148 (AILSLLFSLVAAVLSAFLDAL), 237-257 (FIEFFVRMAPISIPVLIAGLI), 305-325 (AIVALILVVALALHLAEVGLI), 326-346 (GLTVIILATAFCGVIEEHQIG), 349-369 (FEEALPFTSLLVVFFAVVGVI), 393-413 (MFFIANGVLSMISDNVFVATV), 449-469 (ATPNGQAAFLFLLTSAIAPLI), and 477-497 (VWMALPYTLVMGGLGYVMIVI).

It belongs to the NhaB Na(+)/H(+) (TC 2.A.34) antiporter family.

It localises to the cell inner membrane. It carries out the reaction 2 Na(+)(in) + 3 H(+)(out) = 2 Na(+)(out) + 3 H(+)(in). Functionally, na(+)/H(+) antiporter that extrudes sodium in exchange for external protons. This Hahella chejuensis (strain KCTC 2396) protein is Na(+)/H(+) antiporter NhaB.